Consider the following 313-residue polypeptide: Ribosomal RNA small subunit methyltransferase H (313 aa).

Residues 33 to 35, D53, F82, D103, and Q110 each bind S-adenosyl-L-methionine; that span reads AGH.

It belongs to the methyltransferase superfamily. RsmH family.

It is found in the cytoplasm. The enzyme catalyses cytidine(1402) in 16S rRNA + S-adenosyl-L-methionine = N(4)-methylcytidine(1402) in 16S rRNA + S-adenosyl-L-homocysteine + H(+). In terms of biological role, specifically methylates the N4 position of cytidine in position 1402 (C1402) of 16S rRNA. The polypeptide is Ribosomal RNA small subunit methyltransferase H (Acetivibrio thermocellus (strain ATCC 27405 / DSM 1237 / JCM 9322 / NBRC 103400 / NCIMB 10682 / NRRL B-4536 / VPI 7372) (Clostridium thermocellum)).